Here is a 521-residue protein sequence, read N- to C-terminus: Glutamate--tRNA ligase (521 aa).

Residues 13–23 carry the 'HIGH' region motif; that stretch reads PSPSGFLHVGG. The 'KMSKS' region signature appears at 253-257; that stretch reads KLSKR. Position 256 (Lys-256) interacts with ATP.

Belongs to the class-I aminoacyl-tRNA synthetase family. Glutamate--tRNA ligase type 1 subfamily. Monomer.

Its subcellular location is the cytoplasm. It catalyses the reaction tRNA(Glu) + L-glutamate + ATP = L-glutamyl-tRNA(Glu) + AMP + diphosphate. Functionally, catalyzes the attachment of glutamate to tRNA(Glu) in a two-step reaction: glutamate is first activated by ATP to form Glu-AMP and then transferred to the acceptor end of tRNA(Glu). The polypeptide is Glutamate--tRNA ligase (Leptospira interrogans serogroup Icterohaemorrhagiae serovar copenhageni (strain Fiocruz L1-130)).